Here is a 186-residue protein sequence, read N- to C-terminus: Casparian strip membrane protein 3 (186 aa).

At 1–26 the chain is on the cytoplasmic side; it reads MKAGALELGEGSKTSIPRGGVNRGIS. Residues 27–47 traverse the membrane as a helical segment; the sequence is ILDFILRLITIIGTLGSAIAM. The Extracellular segment spans residues 48–74; that stretch reads GTTNETLPFFTQFTQFRAEYDDLPTFT. Residue asparagine 51 is glycosylated (N-linked (GlcNAc...) asparagine). A helical transmembrane segment spans residues 75 to 95; the sequence is FFVIANSIVSGYLVLSLPMSI. At 96–107 the chain is on the cytoplasmic side; sequence LHIVRSGARASR. Residues 108–128 traverse the membrane as a helical segment; that stretch reads IVLIFFDTAMLALLTAAASAA. Over 129–161 the chain is Extracellular; sequence SAIVYLAHKGNAQANWFAICQQFKSFCERISGS. A helical membrane pass occupies residues 162–182; the sequence is LIGSFGGIILFILLVLLSAVA. At 183–186 the chain is on the cytoplasmic side; sequence LSRC.

The protein belongs to the Casparian strip membrane proteins (CASP) family. As to quaternary structure, homodimer and heterodimers.

It is found in the cell membrane. In terms of biological role, regulates membrane-cell wall junctions and localized cell wall deposition. Required for establishment of the Casparian strip membrane domain (CSD) and the subsequent formation of Casparian strips, a cell wall modification of the root endodermis that determines an apoplastic barrier between the intraorganismal apoplasm and the extraorganismal apoplasm and prevents lateral diffusion. This Vitis vinifera (Grape) protein is Casparian strip membrane protein 3.